The chain runs to 599 residues: Sulfite reductase [NADPH] flavoprotein alpha-component (599 aa).

The Flavodoxin-like domain maps to 64-202 (ITIISASQTG…AASEWRARVV (139 aa)). Residues 70–75 (SQTGNA), 117–120 (STQG), and 153–162 (LGDSSYEFFC) contribute to the FMN site. Residues 234-448 (DAPLVASLSV…IEHNDNFRLP (215 aa)) form the FAD-binding FR-type domain. FAD-binding positions include threonine 322, alanine 356, 386 to 389 (RLYS), 404 to 406 (TVG), tyrosine 410, and 419 to 422 (GGAS). NADP(+) is bound by residues 519 to 520 (SR), 525 to 529 (KVYVQ), and aspartate 561. Tyrosine 599 serves as a coordination point for FAD.

This sequence belongs to the NADPH-dependent sulphite reductase flavoprotein subunit CysJ family. In the N-terminal section; belongs to the flavodoxin family. The protein in the C-terminal section; belongs to the flavoprotein pyridine nucleotide cytochrome reductase family. As to quaternary structure, alpha(8)-beta(8). The alpha component is a flavoprotein, the beta component is a hemoprotein. The cofactor is FAD. FMN is required as a cofactor.

It catalyses the reaction hydrogen sulfide + 3 NADP(+) + 3 H2O = sulfite + 3 NADPH + 4 H(+). Its pathway is sulfur metabolism; hydrogen sulfide biosynthesis; hydrogen sulfide from sulfite (NADPH route): step 1/1. In terms of biological role, component of the sulfite reductase complex that catalyzes the 6-electron reduction of sulfite to sulfide. This is one of several activities required for the biosynthesis of L-cysteine from sulfate. The flavoprotein component catalyzes the electron flow from NADPH -&gt; FAD -&gt; FMN to the hemoprotein component. The polypeptide is Sulfite reductase [NADPH] flavoprotein alpha-component (Escherichia coli (strain ATCC 8739 / DSM 1576 / NBRC 3972 / NCIMB 8545 / WDCM 00012 / Crooks)).